A 128-amino-acid chain; its full sequence is Mini-ribonuclease 3 (128 aa).

Aspartate 17 is a catalytic residue.

It belongs to the MrnC RNase family. Homodimer. Mg(2+) serves as cofactor.

The protein localises to the cytoplasm. Its function is as follows. Involved in correct processing of both the 5' and 3' ends of 23S rRNA precursor. Processes 30S rRNA precursor transcript even in absence of ribonuclease 3 (Rnc); Rnc processes 30S rRNA into smaller rRNA precursors. In Streptococcus pneumoniae (strain ATCC BAA-255 / R6), this protein is Mini-ribonuclease 3.